The following is a 641-amino-acid chain: Threonine--tRNA ligase (641 aa).

The TGS domain occupies 1–61; sequence MIKINLLNHQ…TQDGDLEILA (61 aa). The catalytic stretch occupies residues 240–538; that stretch reads DHKRLNKKLD…LIEENKGVFP (299 aa). Positions 334, 385, and 515 each coordinate Zn(2+).

The protein belongs to the class-II aminoacyl-tRNA synthetase family. In terms of assembly, homodimer. Zn(2+) serves as cofactor.

The protein localises to the cytoplasm. The enzyme catalyses tRNA(Thr) + L-threonine + ATP = L-threonyl-tRNA(Thr) + AMP + diphosphate + H(+). Its function is as follows. Catalyzes the attachment of threonine to tRNA(Thr) in a two-step reaction: L-threonine is first activated by ATP to form Thr-AMP and then transferred to the acceptor end of tRNA(Thr). Also edits incorrectly charged L-seryl-tRNA(Thr). This Phytoplasma australiense protein is Threonine--tRNA ligase.